The sequence spans 436 residues: GTPase Der (436 aa).

EngA-type G domains follow at residues 3–168 (PLVA…EEKS) and 177–352 (IRLA…EQRS). GTP contacts are provided by residues 9-16 (GRPNVGKS), 56-60 (DTGGY), 120-123 (NKVE), 183-190 (GRPNVGKS), 230-234 (DTAGL), and 295-298 (NKWD). The KH-like domain occupies 353–436 (QQITTSDLNR…VPFSLRFMQK (84 aa)).

This sequence belongs to the TRAFAC class TrmE-Era-EngA-EngB-Septin-like GTPase superfamily. EngA (Der) GTPase family. Associates with the 50S ribosomal subunit.

Functionally, GTPase that plays an essential role in the late steps of ribosome biogenesis. The chain is GTPase Der from Prosthecochloris aestuarii (strain DSM 271 / SK 413).